Reading from the N-terminus, the 348-residue chain is Alpha-2-HS-glycoprotein (348 aa).

The first 18 residues, 1-18, serve as a signal peptide directing secretion; it reads MKTLVLLLCFTLLWGCQS. The 115-residue stretch at 19 to 133 folds into the Cystatin fetuin-A-type 1 domain; it reads APQGTGLGFR…QFSVMHTKCH (115 aa). Cystine bridges form between Cys32–Cys339, Cys89–Cys100, Cys114–Cys132, Cys146–Cys149, Cys208–Cys219, and Cys230–Cys247. N-linked (GlcNAc...) asparagine glycosylation occurs at Asn99. Phosphoserine occurs at positions 134 and 138. Positions 144–255 constitute a Cystatin fetuin-A-type 2 domain; sequence KVCPHCALLT…TCTAFPTQAN (112 aa). Asn156 and Asn176 each carry an N-linked (GlcNAc...) asparagine glycan. 4 positions are modified to phosphoserine: Ser307, Ser311, Ser314, and Ser316.

This sequence belongs to the fetuin family. In terms of processing, phosphorylated by FAM20C in the extracellular medium. In terms of tissue distribution, expressed by the liver and secreted in plasma.

The protein resides in the secreted. The chain is Alpha-2-HS-glycoprotein (AHSG) from Meriones unguiculatus (Mongolian jird).